A 341-amino-acid chain; its full sequence is Glycerol-3-phosphate dehydrogenase [NAD(P)+] (341 aa).

NADPH contacts are provided by serine 14, phenylalanine 15, arginine 35, and lysine 108. 2 residues coordinate sn-glycerol 3-phosphate: lysine 108 and glycine 136. Alanine 140 contributes to the NADPH binding site. Residues lysine 191, aspartate 244, serine 254, arginine 255, and asparagine 256 each contribute to the sn-glycerol 3-phosphate site. Residue lysine 191 is the Proton acceptor of the active site. Arginine 255 is a binding site for NADPH. The NADPH site is built by valine 279 and glutamate 281.

Belongs to the NAD-dependent glycerol-3-phosphate dehydrogenase family.

The protein resides in the cytoplasm. It catalyses the reaction sn-glycerol 3-phosphate + NAD(+) = dihydroxyacetone phosphate + NADH + H(+). It carries out the reaction sn-glycerol 3-phosphate + NADP(+) = dihydroxyacetone phosphate + NADPH + H(+). It participates in membrane lipid metabolism; glycerophospholipid metabolism. In terms of biological role, catalyzes the reduction of the glycolytic intermediate dihydroxyacetone phosphate (DHAP) to sn-glycerol 3-phosphate (G3P), the key precursor for phospholipid synthesis. The polypeptide is Glycerol-3-phosphate dehydrogenase [NAD(P)+] (Pseudomonas syringae pv. tomato (strain ATCC BAA-871 / DC3000)).